We begin with the raw amino-acid sequence, 250 residues long: uncharacterized protein (250 aa).

Residues Ile2–Phe22 form a helical membrane-spanning segment.

The protein localises to the membrane. This is an uncharacterized protein from Acanthamoeba polyphaga (Amoeba).